The following is a 987-amino-acid chain: MPMDKTFNAAEAEARLYDAWEKAGAFRAGANASRPETFCIMIPPPNVTGSLHMGHAFNNTLQDILTRWHRMRGFDTLWQPGQDHAGIATQMVVERELAKSGQPGRREMGREAFLEKVWEWKEQSGGTIVNQLKRLGASCDWSRNAFTMDPNFQRAVLKVFVDLYEKGFIYRGKRLVNWDPHFETAISDLEVEQVEVNGNMWRLRYQLADGATYRHPVAFDEEGRPTEWEERDYLTVATTRPETMLGDTGIAVNPADERYAHLIGKEVVLPLVGRRIPIVADDYADPSKGTGAVKITPAHDFNDWGVGQRTGLRAINVMSGRATMFLIENPDFTEGCAPSEEALALDGLDRYEARKRVVALAEEQGWLDGIDQDRHMVPHGDRSKVAIEPMLTDQWFVDTAQIVQPAIDAVRTGRTEILPERDAKTYFHWLENIEPWCISRQLWWGHQIPVWYGLDIWPARFEDDGDDTLDEVEIFELLEDGAFNHADPTHHCAFDFEGVSEKFLDDLASLPHPLNNARVVEVASRAEAIDRLAQALADYNLNEDPTHLVYPVWRDPDVLDTWFSSGLWPIGTLGWPEETPELARYFPTNVLITGFDIIFFWVARMMMMQLAVVNEVPFKTVYVHALVRDEKGKKMSKSLGNVLDPLELIDEFGADAVRFTLTAMAAMGRDLKLSTARIQGYRNFGTKLWNACRFAEMNGVWEGHATQAAPPAATATVNRWIIGETGRVREEVDAALAAYRFDSAANALYAFVWGKVCDWYVEFSKPLFDTEAAAETRATMGWVLDQCMVLLHPIMPFITEDLWATTGSRTKMLVHSDWPSFGAELVDPAADREMSWVISLIEEIRSARAQVHVPAGLKLPVVQLALDAAGREALARNEALILRLARLEGFTEAASAPKGALTIAVEGGSFAIPLEGVIDIGAEKARLAKTLEKLEKDMAGLRGRLGNPNFVASAPEEVVDEARTRLEQGEEEGAKLSAALARLSEIA.

The 'HIGH' region signature appears at 45–55 (PNVTGSLHMGH). The 'KMSKS' region signature appears at 634 to 638 (KMSKS). Residue K637 participates in ATP binding. The stretch at 917-985 (VIDIGAEKAR…LSAALARLSE (69 aa)) forms a coiled coil.

Belongs to the class-I aminoacyl-tRNA synthetase family. ValS type 1 subfamily. In terms of assembly, monomer.

It is found in the cytoplasm. The catalysed reaction is tRNA(Val) + L-valine + ATP = L-valyl-tRNA(Val) + AMP + diphosphate. In terms of biological role, catalyzes the attachment of valine to tRNA(Val). As ValRS can inadvertently accommodate and process structurally similar amino acids such as threonine, to avoid such errors, it has a 'posttransfer' editing activity that hydrolyzes mischarged Thr-tRNA(Val) in a tRNA-dependent manner. This Cereibacter sphaeroides (strain ATCC 17023 / DSM 158 / JCM 6121 / CCUG 31486 / LMG 2827 / NBRC 12203 / NCIMB 8253 / ATH 2.4.1.) (Rhodobacter sphaeroides) protein is Valine--tRNA ligase.